Here is a 117-residue protein sequence, read N- to C-terminus: Protein GL2-INTERACTING REPRESSOR 2 (117 aa).

The segment at 1–56 (MSRRNKNGPKLELRLNLSPPPSQASQMSLVRSPNRSNTTSPSSCVSSETNQEENET) is disordered. The EAR signature appears at 10-15 (KLELRL). Over residues 31–49 (RSPNRSNTTSPSSCVSSET) the composition is skewed to low complexity.

In terms of assembly, interacts with GL2. Interacts with TPL.

The protein localises to the nucleus. Functionally, acts as a negative regulator of root hair development redundantly with GIR1. GIR1 and GIR2 may function as adapter proteins that associate with GL2 and participate in the control of root hair formation. GIR1 and GIR2 may function as adapter proteins that associate with TPL and participate in the repression of root gene expression. In Arabidopsis thaliana (Mouse-ear cress), this protein is Protein GL2-INTERACTING REPRESSOR 2.